A 183-amino-acid chain; its full sequence is Glutathione-regulated potassium-efflux system ancillary protein KefG (183 aa).

This sequence belongs to the NAD(P)H dehydrogenase (quinone) family. KefG subfamily. As to quaternary structure, interacts with KefB.

The protein resides in the cell inner membrane. It catalyses the reaction a quinone + NADH + H(+) = a quinol + NAD(+). It carries out the reaction a quinone + NADPH + H(+) = a quinol + NADP(+). Its function is as follows. Regulatory subunit of a potassium efflux system that confers protection against electrophiles. Required for full activity of KefB. This Pectobacterium carotovorum subsp. carotovorum (strain PC1) protein is Glutathione-regulated potassium-efflux system ancillary protein KefG.